The sequence spans 298 residues: Protein Bel-1 (298 aa).

Positions 1–17 (MASWEKEKELAHLHQPE) are enriched in basic and acidic residues. Residues 1 to 46 (MASWEKEKELAHLHQPEDDPLPDLSLLLDMDQFEPTEGPDSNPGAE) form a disordered region. Residues 91-200 (SKWACARLIL…GEPLKPRVRA (110 aa)) mediate DNA binding. The Nuclear localization signal signature appears at 214 to 223 (ADRPKRSRWG). The tract at residues 225–298 (APREQPNTSS…SGPPTGPSEN (74 aa)) is transactivation domain.

Homodimer or homomultimer. Forms complexes with the host nuclear factors NFIA, NFIB, NFIC or NFIX.

Its subcellular location is the host nucleus. Functionally, transcriptional transactivator that activates the viral internal promoter (IP), thereby enhancing its own expression. This transactivation is repressed by nuclear factor I. Also transactivates the long terminal repeat (LTR) promoter, thereby inducing structural gene expression, initiating the late phase of infection. It is therefore a key regulator of viral gene expression. It directly binds to and activates DNA target sites of viral promoters and those of distinct cellular genes. Required for viral replication. The polypeptide is Protein Bel-1 (bel1) (Chlorocebus aethiops (Green monkey)).